Consider the following 488-residue polypeptide: G-patch domain and KOW motifs-containing protein (488 aa).

Over residues 1 to 11 the composition is skewed to pro residues; that stretch reads MAGRESPPPSA. The segment at 1 to 20 is disordered; sequence MAGRESPPPSAPSMAPISFG. N-acetylalanine is present on Ala-2. Residue Ser-25 is modified to Phosphoserine; by PKA. Positions 72–97 are disordered; it reads IQNGSRRQPLSKNPKPSSETSTVLMS. Residues 73-95 show a composition bias toward polar residues; the sequence is QNGSRRQPLSKNPKPSSETSTVL. Ser-115 carries the post-translational modification Phosphoserine. Residues 164–210 enclose the G-patch domain; it reads VEAYGLAMLRGMGWKPGKGIGNTFSQVVKPRVNSIRPKGLGLGANRM. Disordered regions lie at residues 216 to 241 and 295 to 367; these read ASVG…PQGL and QEFD…PRNK. Residues 224-236 are compositionally biased toward basic and acidic residues; that stretch reads PRPDGDRENDKEG. The 28-residue stretch at 231-258 folds into the KOW 1 domain; it reads ENDKEGQPQGLMHGRAVVVLSGPYRGLY. A compositionally biased stretch (polar residues) spans 307–331; it reads VSQTSTEQQNRATGTASSLKAAQNQ. 2 stretches are compositionally biased toward basic and acidic residues: residues 332–341 and 349–363; these read EDSKRRQKGS and PDRQ…EKAA. In terms of domain architecture, KOW 2 spans 401 to 428; the sequence is PDTCVCRTDEGRVLEDVREDMLETLIPK. A Phosphoserine modification is found at Ser-485.

It belongs to the MOS2 family. As to quaternary structure, component of the minor spliceosome, which splices U12-type introns. Interacts with PRKX, PRKACB and DHX16. Post-translationally, phosphorylation regulates its ability to bind RNA.

The protein localises to the nucleus. RNA-binding protein involved in pre-mRNA splicing. As a component of the minor spliceosome, involved in the splicing of U12-type introns in pre-mRNAs. This is G-patch domain and KOW motifs-containing protein (Gpkow) from Mus musculus (Mouse).